The sequence spans 429 residues: MSAIVDIIAREILDSRGNPTVEADVLLESGVMGRAAVPSGASTGSREAIELRDGDAARYLGKGVLQAVENVNTEISETLIGLDAEEQAFIDRTLIELDGTENKSRLGANATLAVSMAIAKAAAEEAGLPLYRYFGGSGPMAMPVPMMNVINGGAHANNSLDIQECMIMPVSMTSFREALRCGAEIFHHLKKLTDKKGYPTTVGDEGGFAPNVGGTEEALNMIQDAIAAAGYEPGRDVLLALDCAASEFYKDGQYVLAGEGLTLSSEGFADYLATLADRFPIVSIEDGMAENDWAGWKTLTDKLGRRLQLVGDDLFVTNTRILEQGIDQGVANSILIKINQIGTLSETFAAVEMAKRAGYTAVISHRSGETEDSTIADIAVGLNAMQIKTGSLSRSDRISKYNQLLRIEEDLGDTVSYPGRRAFYNLRVR.

Position 163 (glutamine 163) interacts with (2R)-2-phosphoglycerate. Glutamate 205 functions as the Proton donor in the catalytic mechanism. Mg(2+)-binding residues include aspartate 242, glutamate 285, and aspartate 312. Residues lysine 337, arginine 366, serine 367, and lysine 388 each contribute to the (2R)-2-phosphoglycerate site. The active-site Proton acceptor is the lysine 337.

Belongs to the enolase family. Requires Mg(2+) as cofactor.

The protein resides in the cytoplasm. Its subcellular location is the secreted. It localises to the cell surface. The catalysed reaction is (2R)-2-phosphoglycerate = phosphoenolpyruvate + H2O. The protein operates within carbohydrate degradation; glycolysis; pyruvate from D-glyceraldehyde 3-phosphate: step 4/5. In terms of biological role, catalyzes the reversible conversion of 2-phosphoglycerate (2-PG) into phosphoenolpyruvate (PEP). It is essential for the degradation of carbohydrates via glycolysis. In Aromatoleum aromaticum (strain DSM 19018 / LMG 30748 / EbN1) (Azoarcus sp. (strain EbN1)), this protein is Enolase.